A 628-amino-acid polypeptide reads, in one-letter code: E3 SUMO-protein ligase PIAS3 (628 aa).

Positions 1–200 (MAELGELKHM…QLRFCLCETS (200 aa)) are interaction with CCAR2. One can recognise an SAP domain in the interval 11 to 45 (VMSFRVSELQVLLGFAGRNKSGRKHELLAKALHLL). The LXXLL motif signature appears at 19–23 (LQVLL). Residues Lys-46 and Lys-56 each participate in a glycyl lysine isopeptide (Lys-Gly) (interchain with G-Cter in SUMO2) cross-link. The tract at residues 72-95 (PSDLSLLSLPPGTSPVGSPSPLAS) is disordered. The 166-residue stretch at 115 to 280 (MHPPLPQPVH…SLSVYLVRQL (166 aa)) folds into the PINIT domain. Residues Lys-230 and Lys-307 each participate in a glycyl lysine isopeptide (Lys-Gly) (interchain with G-Cter in SUMO2) cross-link. The segment at 312 to 393 (PDSEVATTSL…FMEILNSCSD (82 aa)) adopts an SP-RING-type zinc-finger fold. 4 residues coordinate Zn(2+): Cys-343, His-345, Cys-366, and Cys-369. Residues 450–460 (LTIESSSDEED) are SUMO1-binding. Glycyl lysine isopeptide (Lys-Gly) (interchain with G-Cter in SUMO2) cross-links involve residues Lys-466 and Lys-482. The disordered stretch occupies residues 573–618 (LAPTLGSSHRSATPAPAPGRVSSIVAPGSSLREGHGGPLPSGPSLT).

It belongs to the PIAS family. In terms of assembly, binds SUMO1 and UBE2I. Interacts with AR, BCL11A, GFI1, HMGA2, IRF1, MITF, NCOA2, as well as with STAT3, after treatment with IL6, CNTF or OSM and with STAT5, after PRL stimulation. Interacts with PLAG1. Interacts with ZFHX3. Interacts with MTA1. Interacts with CCAR2 (via N-terminus). Interacts with TRIM8. Interacts with PRDM1. In terms of processing, sumoylated. As to expression, widely expressed, with highest levels in lung, kidney and spleen.

It is found in the cytoplasm. The protein localises to the nucleus. It localises to the nucleus speckle. The protein operates within protein modification; protein sumoylation. In terms of biological role, functions as an E3-type small ubiquitin-like modifier (SUMO) ligase, stabilizing the interaction between UBE2I and the substrate, and as a SUMO-tethering factor. Plays a crucial role as a transcriptional coregulation in various cellular pathways, including the STAT pathway and the steroid hormone signaling pathway. The effects of this transcriptional coregulation, transactivation or silencing, may vary depending upon the biological context. Enhances the sumoylation of MTA1 and may participate in its paralog-selective sumoylation. Sumoylates CCAR2 which promotes its interaction with SIRT1. Diminishes the sumoylation of ZFHX3 by preventing the colocalization of ZFHX3 with SUMO1 in the nucleus. The chain is E3 SUMO-protein ligase PIAS3 (Pias3) from Rattus norvegicus (Rat).